A 385-amino-acid polypeptide reads, in one-letter code: Arginine biosynthesis bifunctional protein ArgJ (385 aa).

The substrate site is built by Thr-142, Lys-168, Thr-179, Glu-259, Asn-380, and Thr-385. Thr-179 (nucleophile) is an active-site residue.

It belongs to the ArgJ family. As to quaternary structure, heterotetramer of two alpha and two beta chains.

It localises to the cytoplasm. It catalyses the reaction N(2)-acetyl-L-ornithine + L-glutamate = N-acetyl-L-glutamate + L-ornithine. It carries out the reaction L-glutamate + acetyl-CoA = N-acetyl-L-glutamate + CoA + H(+). It participates in amino-acid biosynthesis; L-arginine biosynthesis; L-ornithine and N-acetyl-L-glutamate from L-glutamate and N(2)-acetyl-L-ornithine (cyclic): step 1/1. The protein operates within amino-acid biosynthesis; L-arginine biosynthesis; N(2)-acetyl-L-ornithine from L-glutamate: step 1/4. Catalyzes two activities which are involved in the cyclic version of arginine biosynthesis: the synthesis of N-acetylglutamate from glutamate and acetyl-CoA as the acetyl donor, and of ornithine by transacetylation between N(2)-acetylornithine and glutamate. The protein is Arginine biosynthesis bifunctional protein ArgJ of Leptospira interrogans serogroup Icterohaemorrhagiae serovar Lai (strain 56601).